We begin with the raw amino-acid sequence, 776 residues long: Disintegrin and metalloproteinase domain-containing protein 7 (776 aa).

An N-terminal signal peptide occupies residues 1–23 (MLPGCIFLMILLILQVKEKVILG). Positions 24–176 (VEGQQLVYPK…NYSCTELNFT (153 aa)) are excised as a propeptide. Topologically, residues 26-669 (GQQLVYPKKL…WEETLNVTNV (644 aa)) are extracellular. 3 N-linked (GlcNAc...) asparagine glycosylation sites follow: Asn-84, Asn-167, and Asn-174. The Peptidase M12B domain maps to 199–394 (KYIELFIVAD…YKPTCMLNIP (196 aa)). 4 cysteine pairs are disulfide-bonded: Cys-310/Cys-389, Cys-350/Cys-373, Cys-352/Cys-357, and Cys-460/Cys-480. In terms of domain architecture, Disintegrin spans 402–488 (FQFCGNKKLD…ACPKDQFRVN (87 aa)). Residues Asn-584, Asn-629, and Asn-665 are each glycosylated (N-linked (GlcNAc...) asparagine). A helical membrane pass occupies residues 670–690 (AILIVVLVLVIVGIGVLILLI). The Cytoplasmic portion of the chain corresponds to 691–776 (RYQKCIKLKQ…GIADPNQSAK (86 aa)). The disordered stretch occupies residues 757–776 (TLKPASKDSRGIADPNQSAK).

As to quaternary structure, interacts with ITM2B in sperm; the interaction increases following capacitation. Interacts with HSPA5 and CANX.

The protein localises to the membrane. In terms of biological role, required for normal male fertility via maintenance of epithelial cell morphology in the caput epididymis and subsequently correct epididymis lumen structure required for sperm development. Plays a role in sperm motility, flagella morphology and tyrosine phosphorylation during sperm capacitance. Plays a role in normal expression levels of HSPA5, ITM2B and ADAM2 in sperm both prior to and post-capacitation. This is a non catalytic metalloprotease-like protein. The chain is Disintegrin and metalloproteinase domain-containing protein 7 (ADAM7) from Macaca fascicularis (Crab-eating macaque).